The sequence spans 550 residues: Urocanate hydratase (550 aa).

NAD(+) contacts are provided by residues Gly48–Gly49, Gln126, Gly172–Gly174, Glu192, Arg197, Asn238–Ala239, Gln259–His263, Tyr268–Leu269, and Tyr317. The active site involves Cys405. Residue Gly487 participates in NAD(+) binding.

Belongs to the urocanase family. The cofactor is NAD(+).

It localises to the cytoplasm. The enzyme catalyses 4-imidazolone-5-propanoate = trans-urocanate + H2O. The protein operates within amino-acid degradation; L-histidine degradation into L-glutamate; N-formimidoyl-L-glutamate from L-histidine: step 2/3. Catalyzes the conversion of urocanate to 4-imidazolone-5-propionate. This Saccharopolyspora erythraea (strain ATCC 11635 / DSM 40517 / JCM 4748 / NBRC 13426 / NCIMB 8594 / NRRL 2338) protein is Urocanate hydratase.